Consider the following 462-residue polypeptide: MDAMQKTIEYTSVSRIAGPLMVIEGIEGIAYGEIVDITTPNGEKRTGQVLEAREDIAVVQVFEGTSELNTSETRVRFTGETAKIGVSKDMLGRIFNGAGKPLDGGPEIIAEKKVDINGYPLNPVSRNPPNAFVQTGISTIDGTNTLVRGQKIPIFSGSGLPHNMLAAQIARQAKVRGEGEQFAVVFAAMGITSEESNYFMDEFKKTGALEKAVVFINLADDPAIERIITPRIALTTAEYLAYEKGMHVLVILTDLTNYCEALREIAAARNEVPGRRGYPGYMYTDLASLYERAGRVKGKEGTVTQIPILTMPHDDITHPIPDLTGYITEGQIVLSRELNRKGIYPPVDILPSLSRLAGNGQGPGKTRDDHAKVISQAYAAYAEGRGLRDLVAVVGEEALTERDRAFLKFADAFEGRVVTQGVDEDRSIEETLDIIWELLTILPKSELKRVSDELIEKYLPKK.

Belongs to the ATPase alpha/beta chains family. In terms of assembly, has multiple subunits with at least A(3), B(3), C, D, E, F, H, I and proteolipid K(x).

The protein localises to the cell membrane. Its function is as follows. Component of the A-type ATP synthase that produces ATP from ADP in the presence of a proton gradient across the membrane. The B chain is a regulatory subunit. This is A-type ATP synthase subunit B from Methanococcus vannielii (strain ATCC 35089 / DSM 1224 / JCM 13029 / OCM 148 / SB).